The chain runs to 290 residues: UPF0761 membrane protein YihY (290 aa).

A run of 6 helical transmembrane segments spans residues 44–64 (LLSL…FPMF), 104–124 (VGAC…DSAL), 140–160 (FAVY…SLAI), 183–203 (ILPL…VPTT), 210–230 (ALVG…GFAL), and 244–264 (VLAV…IVLL).

Belongs to the UPF0761 family.

The protein resides in the cell inner membrane. The chain is UPF0761 membrane protein YihY from Salmonella agona (strain SL483).